The primary structure comprises 257 residues: Hydroxyacylglutathione hydrolase (257 aa).

His-54, His-56, Asp-58, His-59, His-113, Asp-137, and His-175 together coordinate Zn(2+).

It belongs to the metallo-beta-lactamase superfamily. Glyoxalase II family. As to quaternary structure, monomer. It depends on Zn(2+) as a cofactor.

It catalyses the reaction an S-(2-hydroxyacyl)glutathione + H2O = a 2-hydroxy carboxylate + glutathione + H(+). It participates in secondary metabolite metabolism; methylglyoxal degradation; (R)-lactate from methylglyoxal: step 2/2. In terms of biological role, thiolesterase that catalyzes the hydrolysis of S-D-lactoyl-glutathione to form glutathione and D-lactic acid. This chain is Hydroxyacylglutathione hydrolase, found in Microcystis aeruginosa (strain NIES-843 / IAM M-2473).